Reading from the N-terminus, the 443-residue chain is Xaa-Pro dipeptidase (443 aa).

Asp246, Asp257, His339, Glu384, and Glu423 together coordinate Mn(2+).

Belongs to the peptidase M24B family. Bacterial-type prolidase subfamily. Mn(2+) serves as cofactor.

It carries out the reaction Xaa-L-Pro dipeptide + H2O = an L-alpha-amino acid + L-proline. Functionally, splits dipeptides with a prolyl residue in the C-terminal position. The polypeptide is Xaa-Pro dipeptidase (Salmonella arizonae (strain ATCC BAA-731 / CDC346-86 / RSK2980)).